A 64-amino-acid chain; its full sequence is Cytochrome c oxidase subunit 5C (64 aa).

Residues valine 16–tryptophan 34 form a helical membrane-spanning segment.

This sequence belongs to the cytochrome c oxidase subunit 5C family. Sweet potato cytochrome C oxidase consists of at least seven different polypeptides species, subunits I, II, III, IV, Va, Vb, and Vc in order of MW.

The protein resides in the mitochondrion inner membrane. Functionally, this protein is one of the nuclear-coded polypeptide chains of cytochrome c oxidase, the terminal oxidase in mitochondrial electron transport. The protein is Cytochrome c oxidase subunit 5C (COX5C) of Ipomoea batatas (Sweet potato).